Here is a 170-residue protein sequence, read N- to C-terminus: Peptide deformylase (170 aa).

Residues Cys-94 and His-136 each contribute to the Fe cation site. The active site involves Glu-137. A Fe cation-binding site is contributed by His-140.

Belongs to the polypeptide deformylase family. The cofactor is Fe(2+).

It carries out the reaction N-terminal N-formyl-L-methionyl-[peptide] + H2O = N-terminal L-methionyl-[peptide] + formate. Its function is as follows. Removes the formyl group from the N-terminal Met of newly synthesized proteins. Requires at least a dipeptide for an efficient rate of reaction. N-terminal L-methionine is a prerequisite for activity but the enzyme has broad specificity at other positions. The protein is Peptide deformylase of Stenotrophomonas maltophilia (strain R551-3).